The chain runs to 2159 residues: MTSLAHQLKRLALPQNDSSLLGRKEVVSVLFDPKDAASMDRSTFHALGCTGLEELMGIDAAFSEFQETLFSQGSLTLERSVQSKEVNKKLDKSISLFLTRLSPYFLLKPALKCIEWLLHRFHIHLYNQDSLIACVLPYHETKVFVRVIQLFKIEDPTHKWHWLHGIQKPGVPLARGTLLTHCYKDLGFMDFVCSMVTNSVKAYSELTRDGNCPQLRVIFSFYASTIVSALDAVEKITNSIIAKLLPFVQLGLKSNLSDYTAATYMIVCQMAVKVVMEAQLVDSLSVQLSRSLGRTPQLIREGLSCIIILLQNQKKGVIGQKTYGYLCAVPTLVSTLQSISTVHDISPLLSYLLPHLIHSVMTQNDEQQNEGLSDSTGLLQSVFQNLQLSSNLENTAAKLLLEEYVVCGNELPSDGISALNQRIQPTVRLFESRYPCALDMALENHVKNVSSDNEKNLLHQFISLTLSCGKYQILPESETSLMLSLNHPLPSVRNMAVDYLKEILNSEHNSFDEAFLKDALLERIKDDSPEVVLSALKALQHHMGLMDVEDTVSSLISLLHRIKPSADWCPVLKEAVRVLDDPRIIEGNPDLKAYISWELLPFLVMTRAAPECVELQMTSAITETTLISQHPLTQGWAKVLKAVLAKTSESDLLGVANEMLTTTLIKNLANMDHATKRNTLENVCDILSRQGSSVRDRAAFVVFSSALLQSLQSMTESQHLHTAQSVYKLLEPLLLQAYTIQPEQVSDQPADECLPVCVALGEFLQKISCGLSAEQEQGLLLLSLLRLFITTLKCPDSTFKGEPWWNPEKMETTTCCYLRLLCRLFDVVISGASQGPLAPCFRSLMQPLLQVHLNEPMVLFKFLSLSWGYNSNLGDQLDCRVSAILQTQALYVGKAFLSSQPVKTLNLLASDSSPVVPSLLVCVCSGVCEVRRAAIAVLQCLSGLVSSPYHPLVEKLLKSSEEIIADSSYLTQALSKFYEEAVSRKDKNKKLASVEQLLQCLQSPFCPSYTSKTLLRALQDVHGEPVLSVLLPAVERLLEQCAPDSCTFLPDEALLLQLLLSKFSEMSAPLLVKDPRCLEVFIRALHTSARPYPTIPSFQITALEQITKPFFTAIGDEKIQQKILSILFDLLVGNKSPACAQSINSVFKTIAVDCELVANELIPADKQRVTATVQQTRRSKMRKTQDTSGAVPEESVVSWPRVTLILELLQHKKKLKRAQYLVPALFNLLSRCLEPAAAEQENIEYTKQLILICLLNVCQKLSPEGGPISKDVLEEDKFNMELVVQCVRVSEMPQTHHHALLLLGALAGIFPEKVLHNIMPIFTFMGANIMRLDDTYSFQVINKTVQAVIPALIKAHEGGSSQSEGHMETVVAQIIHVFVDALPHVPEHRRLPILSQLMSTLGPSRFLWVLMLLLFKQHVTQTSAGATGAEKEAVVERDQDFWILVCCEFEVKEQLTSLIKILQYLMTLPQDREEAPEKKKPRGRSAVKKDETVSDLIFSVETHSGKDLRHFKFISISFMAQLLASDGFVGKVADCEDITESTLQALQQDLLVEVLRYIQAVARCVEDNADKPTAKFWRALLSKSYDTLDKVNALLPMDTFITVMRGLVGNQLASVRRKAMELLNNKLQQRTKWLKEQITALLELIGTLLSIVGRSHRQVTAQEEEELAINRQTALYSLKLLCRNFGSDHKEEFVPVLNKAVELVADKDEEKNVMGSALLCVAEVTSTLKALAIPQLHRLMPAVLDTLKERKDLLNNEIYLLSAVTALQRASETLPHFISPYLLDTILQVTRLTLLARRLTSCPQLSVRLASLSSTLATKLPPRVLIPTITKCYCSMVDAQQNRLSPLMNILKEHISHMDKDQLNNHQSELTSFFLSALDFRAQHCQGDLKKTAEIEGCVIDCLLVMIMKLSEVTFRPLFFKLFDWSKIDGASKDRLLTFYRLADRIADKLKGLFVLFAGQLVKPFSDLLHQLNISHTDKAFFDSEDESDDDSDEEADDNVTKSSLLLQYVLDCLHKIFLYDTQHFLSKERADALLCPLVDQLENMLGGEETYKSRITTHLVPCIAQFAVAMRDDSQWKVLNYQILLKTRHSSPKVRFSALVMLLELAGKLRENYMVLLPETIPFLAELMEDECEEVEHQVQKVIQEMETILGEPLQSYF.

HEAT repeat units lie at residues 346-384, 509-548, 909-947, 1024-1062, 1219-1260, 1594-1632, 1733-1773, and 2115-2153; these read SPLL…SVFQ, NSFD…LMDV, ASDS…LVSS, EPVL…LLSK, QYLV…VCQK, LLPM…QRTK, IPQL…ASET, and MVLL…ILGE.

It belongs to the HEATR1/UTP10 family. In terms of assembly, part of the small subunit (SSU) processome, composed of more than 70 proteins and the RNA chaperone small nucleolar RNA (snoRNA) U3. Interacts with MYC; the interaction is required for localization of MYC to the nucleolus.

The protein localises to the nucleus. It localises to the nucleolus. In terms of biological role, ribosome biogenesis factor; required for recruitment of Myc to nucleoli. Involved in nucleolar processing of pre-18S ribosomal RNA. Required for optimal pre-ribosomal RNA transcription by RNA polymerase I. Part of the small subunit (SSU) processome, first precursor of the small eukaryotic ribosomal subunit. During the assembly of the SSU processome in the nucleolus, many ribosome biogenesis factors, an RNA chaperone and ribosomal proteins associate with the nascent pre-rRNA and work in concert to generate RNA folding, modifications, rearrangements and cleavage as well as targeted degradation of pre-ribosomal RNA by the RNA exosome. Involved in neuronal-lineage cell proliferation. Required for cell survival in the CNS through its role in rRNA synthesis and processing. The polypeptide is HEAT repeat-containing protein 1 (heatr1) (Danio rerio (Zebrafish)).